Reading from the N-terminus, the 253-residue chain is uncharacterized protein (253 aa).

Serine 145 provides a ligand contact to substrate. Tyrosine 159 functions as the Proton acceptor in the catalytic mechanism.

This sequence belongs to the short-chain dehydrogenases/reductases (SDR) family.

This is an uncharacterized protein from Mycobacterium tuberculosis (strain CDC 1551 / Oshkosh).